The chain runs to 392 residues: 4-hydroxy-3-methylbut-2-en-1-yl diphosphate synthase (flavodoxin) (392 aa).

The [4Fe-4S] cluster site is built by cysteine 280, cysteine 283, cysteine 315, and glutamate 322. Over residues threonine 371 to glutamate 380 the composition is skewed to basic and acidic residues. The interval threonine 371 to asparagine 392 is disordered. Over residues threonine 381–asparagine 392 the composition is skewed to polar residues.

This sequence belongs to the IspG family. It depends on [4Fe-4S] cluster as a cofactor.

The catalysed reaction is (2E)-4-hydroxy-3-methylbut-2-enyl diphosphate + oxidized [flavodoxin] + H2O + 2 H(+) = 2-C-methyl-D-erythritol 2,4-cyclic diphosphate + reduced [flavodoxin]. The protein operates within isoprenoid biosynthesis; isopentenyl diphosphate biosynthesis via DXP pathway; isopentenyl diphosphate from 1-deoxy-D-xylulose 5-phosphate: step 5/6. Functionally, converts 2C-methyl-D-erythritol 2,4-cyclodiphosphate (ME-2,4cPP) into 1-hydroxy-2-methyl-2-(E)-butenyl 4-diphosphate. The sequence is that of 4-hydroxy-3-methylbut-2-en-1-yl diphosphate synthase (flavodoxin) from Mycobacterium leprae (strain Br4923).